Here is a 453-residue protein sequence, read N- to C-terminus: uncharacterized protein (453 aa).

The YrdC-like domain occupies 276-437 (IAQTKQIKAL…TKQIVRGSST (162 aa)).

This is an uncharacterized protein from Mycoplasma pneumoniae (strain ATCC 29342 / M129 / Subtype 1) (Mycoplasmoides pneumoniae).